Consider the following 530-residue polypeptide: Testis-expressed protein 44 (530 aa).

Acidic residues predominate over residues 1 to 10 (MTAEPLEDPE). Disordered regions lie at residues 1–85 (MTAE…FIRT), 207–233 (ATSA…TSLL), 256–290 (ENNR…QPVL), and 305–384 (QTSV…SPDF). Composition is skewed to polar residues over residues 11–26 (ASSS…SSDN), 222–233 (GQDNPEETTSLL), and 257–280 (NNRT…TLGN). Positions 365–381 (PPDPPDPGSPGGSPPHS) are enriched in pro residues. Ser468 bears the Phosphoserine mark.

The protein resides in the cytoplasm. This Mus musculus (Mouse) protein is Testis-expressed protein 44 (Tex44).